The sequence spans 136 residues: Histone H3 (136 aa).

Residues Met-1–Arg-43 are disordered. Lys-5 carries the post-translational modification N6-methylated lysine. At Lys-10 the chain carries N6-acetyllysine; alternate. At Lys-10 the chain carries N6-methylated lysine; alternate. Ser-11 bears the Phosphoserine mark. At Thr-12 the chain carries Phosphothreonine. Lys-15 bears the N6-acetyllysine mark. N6-acetyllysine; alternate occurs at positions 19 and 24. N6-methylated lysine; alternate is present on residues Lys-19 and Lys-24. Residue Lys-28 is modified to N6-methylated lysine. Phosphoserine is present on Ser-29. Lys-37 carries the N6-methylated lysine modification.

The protein belongs to the histone H3 family. In terms of assembly, the nucleosome is a histone octamer containing two molecules each of H2A, H2B, H3 and H4 assembled in one H3-H4 heterotetramer and two H2A-H2B heterodimers. The octamer wraps approximately 147 bp of DNA. In terms of processing, acetylation is generally linked to gene activation. Can be acetylated to form H3K9ac, H3K14ac, H3K18ac and H3K23ac. H3K9ac could compete with H3K9me and prevent gene silencing. H3K9ac is restricted to euchromatin. Post-translationally, methylated to form mainly H3K4me, H3K9me, H3K18me, H3K23me, H3K27me and H3K36me. H3K4me1/2/3, H3K9me3, H3K27me3 and H3K36me1/2/3 are typical marks for euchromatin, whereas heterochromatic chromocenters are enriched in H3K9me1/2 and H3K27me1/2. H2BK143ub1 is probably prerequisite for H3K4me. Can be phosphorylated to form H3S10ph, H3T11ph and H3S28ph.

The protein localises to the nucleus. It is found in the chromosome. Core component of nucleosome. Nucleosomes wrap and compact DNA into chromatin, limiting DNA accessibility to the cellular machineries which require DNA as a template. Histones thereby play a central role in transcription regulation, DNA repair, DNA replication and chromosomal stability. DNA accessibility is regulated via a complex set of post-translational modifications of histones, also called histone code, and nucleosome remodeling. This Griffithsia japonica (Red alga) protein is Histone H3.